The primary structure comprises 285 residues: Probable endonuclease 4 (285 aa).

Zn(2+) contacts are provided by His-69, His-109, Glu-145, Asp-179, His-182, His-216, Asp-229, His-231, and Glu-261.

This sequence belongs to the AP endonuclease 2 family. Zn(2+) serves as cofactor.

It catalyses the reaction Endonucleolytic cleavage to 5'-phosphooligonucleotide end-products.. Its function is as follows. Endonuclease IV plays a role in DNA repair. It cleaves phosphodiester bonds at apurinic or apyrimidinic (AP) sites, generating a 3'-hydroxyl group and a 5'-terminal sugar phosphate. The chain is Probable endonuclease 4 from Escherichia fergusonii (strain ATCC 35469 / DSM 13698 / CCUG 18766 / IAM 14443 / JCM 21226 / LMG 7866 / NBRC 102419 / NCTC 12128 / CDC 0568-73).